The following is a 443-amino-acid chain: CBL-interacting protein kinase 29 (443 aa).

In terms of domain architecture, Protein kinase spans 32 to 292 (YELGGLLGRG…TEEIITHPWF (261 aa)). Residues 38 to 46 (LGRGASAKV) and lysine 61 each bind ATP. Aspartate 164 (proton acceptor) is an active-site residue. The interval 182-207 (DFGLGAVADGALHHTLCGTPAYVAPE) is activation loop. The NAF domain maps to 313-347 (AKFKTEFKEDDMARDMTAFDILACSPGSDLSGLFG). The interval 350-379 (PGKERVFVGEPAAAVLSRVEEAGKKEGYMV) is PPI.

This sequence belongs to the protein kinase superfamily. CAMK Ser/Thr protein kinase family. SNF1 subfamily. Mn(2+) is required as a cofactor.

The catalysed reaction is L-seryl-[protein] + ATP = O-phospho-L-seryl-[protein] + ADP + H(+). It catalyses the reaction L-threonyl-[protein] + ATP = O-phospho-L-threonyl-[protein] + ADP + H(+). Functionally, CIPK serine-threonine protein kinases interact with CBL proteins. Binding of a CBL protein to the regulatory NAF domain of CIPK protein lead to the activation of the kinase in a calcium-dependent manner. The polypeptide is CBL-interacting protein kinase 29 (CIPK29) (Oryza sativa subsp. japonica (Rice)).